A 566-amino-acid chain; its full sequence is DNA ligase B (566 aa).

The active-site N6-AMP-lysine intermediate is the Lys125.

The protein belongs to the NAD-dependent DNA ligase family. LigB subfamily.

The catalysed reaction is NAD(+) + (deoxyribonucleotide)n-3'-hydroxyl + 5'-phospho-(deoxyribonucleotide)m = (deoxyribonucleotide)n+m + AMP + beta-nicotinamide D-nucleotide.. In terms of biological role, catalyzes the formation of phosphodiester linkages between 5'-phosphoryl and 3'-hydroxyl groups in double-stranded DNA using NAD as a coenzyme and as the energy source for the reaction. The sequence is that of DNA ligase B from Pseudomonas putida (strain GB-1).